We begin with the raw amino-acid sequence, 309 residues long: Ferrochelatase (309 aa).

The Fe cation site is built by His-185 and Glu-262.

The protein belongs to the ferrochelatase family.

The protein localises to the cytoplasm. The enzyme catalyses heme b + 2 H(+) = protoporphyrin IX + Fe(2+). Its pathway is porphyrin-containing compound metabolism; protoheme biosynthesis; protoheme from protoporphyrin-IX: step 1/1. In terms of biological role, catalyzes the ferrous insertion into protoporphyrin IX. The protein is Ferrochelatase of Campylobacter jejuni subsp. jejuni serotype O:23/36 (strain 81-176).